The sequence spans 657 residues: DNA mismatch repair protein MutL (657 aa).

It belongs to the DNA mismatch repair MutL/HexB family.

Functionally, this protein is involved in the repair of mismatches in DNA. It is required for dam-dependent methyl-directed DNA mismatch repair. May act as a 'molecular matchmaker', a protein that promotes the formation of a stable complex between two or more DNA-binding proteins in an ATP-dependent manner without itself being part of a final effector complex. The protein is DNA mismatch repair protein MutL of Streptococcus agalactiae serotype III (strain NEM316).